Reading from the N-terminus, the 430-residue chain is Glutamate-1-semialdehyde 2,1-aminomutase (430 aa).

K267 carries the N6-(pyridoxal phosphate)lysine modification.

This sequence belongs to the class-III pyridoxal-phosphate-dependent aminotransferase family. HemL subfamily. As to quaternary structure, homodimer. Pyridoxal 5'-phosphate is required as a cofactor.

It is found in the cytoplasm. It carries out the reaction (S)-4-amino-5-oxopentanoate = 5-aminolevulinate. It participates in porphyrin-containing compound metabolism; protoporphyrin-IX biosynthesis; 5-aminolevulinate from L-glutamyl-tRNA(Glu): step 2/2. The polypeptide is Glutamate-1-semialdehyde 2,1-aminomutase (Sulfurovum sp. (strain NBC37-1)).